The primary structure comprises 190 residues: Protein GrpE (190 aa).

A disordered region spans residues 1 to 33 (MSEQEKDQNNAEPQVETVEEQQAAAAAEAVEPT). Residues 11–32 (AEPQVETVEEQQAAAAAEAVEP) are compositionally biased toward low complexity.

It belongs to the GrpE family. In terms of assembly, homodimer.

It is found in the cytoplasm. Participates actively in the response to hyperosmotic and heat shock by preventing the aggregation of stress-denatured proteins, in association with DnaK and GrpE. It is the nucleotide exchange factor for DnaK and may function as a thermosensor. Unfolded proteins bind initially to DnaJ; upon interaction with the DnaJ-bound protein, DnaK hydrolyzes its bound ATP, resulting in the formation of a stable complex. GrpE releases ADP from DnaK; ATP binding to DnaK triggers the release of the substrate protein, thus completing the reaction cycle. Several rounds of ATP-dependent interactions between DnaJ, DnaK and GrpE are required for fully efficient folding. This chain is Protein GrpE, found in Alcanivorax borkumensis (strain ATCC 700651 / DSM 11573 / NCIMB 13689 / SK2).